The primary structure comprises 85 residues: MSQRGNRKTQVGIVVSDKMDKTVVVQVSHLVKHPVYNKYIKRSVKYKAHDEENSCKSGDRVQIVETRPLSKDKRWRVRQIIDRFE.

The protein belongs to the universal ribosomal protein uS17 family. As to quaternary structure, part of the 30S ribosomal subunit.

One of the primary rRNA binding proteins, it binds specifically to the 5'-end of 16S ribosomal RNA. The chain is Small ribosomal subunit protein uS17 from Geobacter metallireducens (strain ATCC 53774 / DSM 7210 / GS-15).